The primary structure comprises 209 residues: Chaperone protein TorD (209 aa).

It belongs to the TorD/DmsD family. TorD subfamily.

It is found in the cytoplasm. In terms of biological role, involved in the biogenesis of TorA. Acts on TorA before the insertion of the molybdenum cofactor and, as a result, probably favors a conformation of the apoenzyme that is competent for acquiring the cofactor. The polypeptide is Chaperone protein TorD (Shewanella massilia).